The chain runs to 561 residues: Urocanate hydratase (561 aa).

NAD(+) is bound by residues 52–53 (GG), Gln-130, 176–178 (GMG), Glu-196, Arg-201, 242–243 (NA), 263–267 (QTSAH), 273–274 (YL), and Tyr-322. The active site involves Cys-410. Gly-492 contributes to the NAD(+) binding site.

Belongs to the urocanase family. NAD(+) is required as a cofactor.

Its subcellular location is the cytoplasm. It catalyses the reaction 4-imidazolone-5-propanoate = trans-urocanate + H2O. It participates in amino-acid degradation; L-histidine degradation into L-glutamate; N-formimidoyl-L-glutamate from L-histidine: step 2/3. Its function is as follows. Catalyzes the conversion of urocanate to 4-imidazolone-5-propionate. This is Urocanate hydratase from Salmonella typhi.